The chain runs to 25 residues: Pregnancy-associated glycoprotein 74 (25 aa).

Asn-4 and Asn-21 each carry an N-linked (GlcNAc...) asparagine glycan.

This sequence belongs to the peptidase A1 family. In terms of processing, N-glycosylated. In terms of tissue distribution, placental cotyledons.

The protein localises to the secreted. The protein resides in the extracellular space. The sequence is that of Pregnancy-associated glycoprotein 74 from Bison bison (American bison).